Consider the following 229-residue polypeptide: Coiled-coil domain-containing protein 134 (229 aa).

Residues 1-22 (MDLLQFLAAFSVLLWPGTEVTG) form the signal peptide. Asn-148 carries N-linked (GlcNAc...) asparagine glycosylation. The disordered stretch occupies residues 182 to 229 (FKTDQTEFIPSTDPFQKALREEEKRRKKEERRKEIRKGPRISRSQSEL). Residues 196–218 (FQKALREEEKRRKKEERRKEIRK) are a coiled coil. The short motif at 226 to 229 (QSEL) is the Prevents secretion from ER element.

It belongs to the CCDC134 family. As to quaternary structure, interacts with TADA2A. Associates with the PCAF complex via TADA2A binding. Post-translationally, O-glycosylated, with additional sialic acid modifications.

It is found in the endoplasmic reticulum lumen. The protein resides in the secreted. It localises to the cytoplasm. Its subcellular location is the nucleus. Molecular adapter required to prevent protein hyperglycosylation of HSP90B1: during translation, associates with nascent HSP90B1 and the STT3A catalytic component of the OST-A complex and tethers them to a specialized translocon that forms a microenvironment for HSP90B1 folding. In the CCDC134-containing translocon, STT3A associates with the SRT pseudosubstrate motif of HSP90B1, preventing access to facultative glycosylation sites until folding is completed, preventing hyperglycosylation and subsequent degradation of HSP90B1. In extracellular secreted form, promotes proliferation and activation of CD8(+) T-cells, suggesting a cytokine-like function. May inhibit ERK and JNK signaling activity. May suppress cell migration and invasion activity, via its effects on ERK and JNK signaling. May also localize in the nucleus: enhances stability of the PCAF histone acetyltransferase (HAT) complex member TADA2A and thus promotes PCAF-mediated histone acetyltransferase activity. Has a critical role in the regulation of osteogenesis and bone development. This chain is Coiled-coil domain-containing protein 134 (Ccdc134), found in Mus musculus (Mouse).